The chain runs to 545 residues: Chaperonin GroEL (545 aa).

Residues T29–P32, K50, D86–T90, G413, and D495 contribute to the ATP site.

The protein belongs to the chaperonin (HSP60) family. As to quaternary structure, forms a cylinder of 14 subunits composed of two heptameric rings stacked back-to-back. Interacts with the co-chaperonin GroES.

The protein localises to the cytoplasm. It carries out the reaction ATP + H2O + a folded polypeptide = ADP + phosphate + an unfolded polypeptide.. Functionally, together with its co-chaperonin GroES, plays an essential role in assisting protein folding. The GroEL-GroES system forms a nano-cage that allows encapsulation of the non-native substrate proteins and provides a physical environment optimized to promote and accelerate protein folding. The chain is Chaperonin GroEL from Borrelia garinii subsp. bavariensis (strain ATCC BAA-2496 / DSM 23469 / PBi) (Borreliella bavariensis).